The sequence spans 226 residues: RNA annealing protein YRA1 (226 aa).

The segment at 1-62 (MSANLDKSLD…PIRKNTRAPP (62 aa)) is disordered. At Ser2 the chain carries N-acetylserine. A phosphoserine mark is found at Ser8 and Ser100. One can recognise an RRM domain in the interval 78-158 (VKVNVEGLPR…SRLRLNLIVD (81 aa)). The interval 173–226 (AMPQKGGNAPRPVKRGPNRKAAMAKSQNKPKREKPAKKSLEDLDKEMADYFEKK) is disordered. Positions 208–226 (AKKSLEDLDKEMADYFEKK) are enriched in basic and acidic residues.

Component of the transcription/export (TREX) complex, which is at least is formed of SUB2, TEX1 and YRA1 and the THO complex composed of HPR1, MFT1, THO2 and THP1. Interacts with RDS3 and YRA2.

The protein resides in the nucleus. Its function is as follows. RNA-binding RNA annealing protein. May have a role in pre-mRNA metabolism. Component the TREX complex, which operates in coupling transcription elongation to mRNA export. The chain is RNA annealing protein YRA1 (YRA1) from Saccharomyces cerevisiae (strain ATCC 204508 / S288c) (Baker's yeast).